Reading from the N-terminus, the 360-residue chain is Photosystem II protein D1 (360 aa).

Transmembrane regions (helical) follow at residues 30 to 47, 119 to 134, and 143 to 157; these read YVGWFGVLMIPCLLAAAA, HFLIGISAYMGRQWEL, and WICVAYSAPVSAAFA. Position 119 (His119) interacts with chlorophyll a. A pheophytin a-binding site is contributed by Tyr127. [CaMn4O5] cluster is bound by residues Asp171 and Glu190. A helical membrane pass occupies residues 198 to 219; sequence FHMAGVAGMFGGSLFSAMHGSL. His199 serves as a coordination point for chlorophyll a. Residues His216 and 265-266 each bind a quinone; that span reads SF. Fe cation is bound at residue His216. A Fe cation-binding site is contributed by His273. The helical transmembrane segment at 275-289 threads the bilayer; the sequence is FLAVFPVVCVWLTSM. His333, Glu334, Asp343, and Ala345 together coordinate [CaMn4O5] cluster. Positions 346–360 are excised as a propeptide; sequence AAESTTVALSAPAIG.

Belongs to the reaction center PufL/M/PsbA/D family. PSII is composed of 1 copy each of membrane proteins PsbA, PsbB, PsbC, PsbD, PsbE, PsbF, PsbH, PsbI, PsbJ, PsbK, PsbL, PsbM, PsbT, PsbX, PsbY, Psb30/Ycf12, peripheral proteins PsbO, CyanoQ (PsbQ), PsbU, PsbV and a large number of cofactors. It forms dimeric complexes. The D1/D2 heterodimer binds P680, chlorophylls that are the primary electron donor of PSII, and subsequent electron acceptors. It shares a non-heme iron and each subunit binds pheophytin, quinone, additional chlorophylls, carotenoids and lipids. D1 provides most of the ligands for the Mn4-Ca-O5 cluster of the oxygen-evolving complex (OEC). There is also a Cl(-1) ion associated with D1 and D2, which is required for oxygen evolution. The PSII complex binds additional chlorophylls, carotenoids and specific lipids. serves as cofactor. In terms of processing, tyr-162 forms a radical intermediate that is referred to as redox-active TyrZ, YZ or Y-Z. Post-translationally, C-terminally processed by CtpA; processing is essential to allow assembly of the oxygen-evolving complex and thus photosynthetic growth.

It is found in the cellular thylakoid membrane. It catalyses the reaction 2 a plastoquinone + 4 hnu + 2 H2O = 2 a plastoquinol + O2. Photosystem II (PSII) is a light-driven water:plastoquinone oxidoreductase that uses light energy to abstract electrons from H(2)O, generating O(2) and a proton gradient subsequently used for ATP formation. It consists of a core antenna complex that captures photons, and an electron transfer chain that converts photonic excitation into a charge separation. The D1/D2 (PsbA/PsbD) reaction center heterodimer binds P680, the primary electron donor of PSII as well as several subsequent electron acceptors. This chain is Photosystem II protein D1, found in Prochlorococcus marinus (strain MIT 9312).